Here is an 87-residue protein sequence, read N- to C-terminus: Keratin-associated protein 19-3 (87 aa).

A 23 X 2 AA repeats of G-[YCGS] region spans residues 9–82 (GGLGYGYGSF…RRPSCCGGYG (74 aa)).

Belongs to the KRTAP type 19 family. As to quaternary structure, interacts with hair keratins. Strong expression in narrowly defined pattern restricted to the lower and middle cortical regions of the hair shaft in both developing and cycling hair. During hair follicle regression (catagen), expression levels decrease until expression is no longer detectable in follicles at resting stage (telogen).

In terms of biological role, in the hair cortex, hair keratin intermediate filaments are embedded in an interfilamentous matrix, consisting of hair keratin-associated proteins (KRTAP), which are essential for the formation of a rigid and resistant hair shaft through their extensive disulfide bond cross-linking with abundant cysteine residues of hair keratins. The matrix proteins include the high-sulfur and high-glycine-tyrosine keratins. This chain is Keratin-associated protein 19-3 (Krtap19-3), found in Mus musculus (Mouse).